The sequence spans 102 residues: Urease subunit beta (102 aa).

Belongs to the urease beta subunit family. As to quaternary structure, heterotrimer of UreA (gamma), UreB (beta) and UreC (alpha) subunits. Three heterotrimers associate to form the active enzyme.

It is found in the cytoplasm. The enzyme catalyses urea + 2 H2O + H(+) = hydrogencarbonate + 2 NH4(+). Its pathway is nitrogen metabolism; urea degradation; CO(2) and NH(3) from urea (urease route): step 1/1. The polypeptide is Urease subunit beta (Blochmanniella pennsylvanica (strain BPEN)).